The chain runs to 1052 residues: Carbamoyl phosphate synthase large chain (1052 aa).

The tract at residues 1 to 399 (MRENVKRVLV…ALQKAVRMLD (399 aa)) is carboxyphosphate synthetic domain. ATP contacts are provided by Arg127, Arg167, Gly173, Gly174, Lys206, Leu208, Glu213, Gly239, Val240, His241, Gln282, and Glu296. In terms of domain architecture, ATP-grasp 1 spans 131–325 (RETMINVNLP…LAYVSAKLAL (195 aa)). The Mg(2+) site is built by Gln282, Glu296, and Asn298. Mn(2+) is bound by residues Gln282, Glu296, and Asn298. Residues 400–548 (LGEPGIIGGK…VTYNGTEDDI (149 aa)) form an oligomerization domain region. The carbamoyl phosphate synthetic domain stretch occupies residues 549–930 (EFSNGIRKLL…LKSWLSSSPN (382 aa)). Positions 674-864 (SRLLDKLGIK…IIDLALTGVI (191 aa)) constitute an ATP-grasp 2 domain. Residues Arg710, Lys749, Ile751, Glu756, Gly780, Val781, His782, Ser783, Gln823, and Glu835 each coordinate ATP. The Mg(2+) site is built by Gln823, Glu835, and Asn837. Residues Gln823, Glu835, and Asn837 each coordinate Mn(2+). An MGS-like domain is found at 930 to 1052 (NRLPDQKGIA…YEIGEYGAGI (123 aa)). The tract at residues 931–1052 (RLPDQKGIAL…YEIGEYGAGI (122 aa)) is allosteric domain.

Belongs to the CarB family. As to quaternary structure, composed of two chains; the small (or glutamine) chain promotes the hydrolysis of glutamine to ammonia, which is used by the large (or ammonia) chain to synthesize carbamoyl phosphate. Tetramer of heterodimers (alpha,beta)4. The cofactor is Mg(2+). It depends on Mn(2+) as a cofactor.

It catalyses the reaction hydrogencarbonate + L-glutamine + 2 ATP + H2O = carbamoyl phosphate + L-glutamate + 2 ADP + phosphate + 2 H(+). It carries out the reaction hydrogencarbonate + NH4(+) + 2 ATP = carbamoyl phosphate + 2 ADP + phosphate + 2 H(+). It participates in amino-acid biosynthesis; L-arginine biosynthesis; carbamoyl phosphate from bicarbonate: step 1/1. It functions in the pathway pyrimidine metabolism; UMP biosynthesis via de novo pathway; (S)-dihydroorotate from bicarbonate: step 1/3. Its function is as follows. Large subunit of the glutamine-dependent carbamoyl phosphate synthetase (CPSase). CPSase catalyzes the formation of carbamoyl phosphate from the ammonia moiety of glutamine, carbonate, and phosphate donated by ATP, constituting the first step of 2 biosynthetic pathways, one leading to arginine and/or urea and the other to pyrimidine nucleotides. The large subunit (synthetase) binds the substrates ammonia (free or transferred from glutamine from the small subunit), hydrogencarbonate and ATP and carries out an ATP-coupled ligase reaction, activating hydrogencarbonate by forming carboxy phosphate which reacts with ammonia to form carbamoyl phosphate. This chain is Carbamoyl phosphate synthase large chain, found in Sulfolobus acidocaldarius (strain ATCC 33909 / DSM 639 / JCM 8929 / NBRC 15157 / NCIMB 11770).